The following is a 500-amino-acid chain: L-arabinose isomerase (500 aa).

Mn(2+) is bound by residues Glu-306, Glu-333, His-350, and His-450.

The protein belongs to the arabinose isomerase family. In terms of assembly, homohexamer. Requires Mn(2+) as cofactor.

It carries out the reaction beta-L-arabinopyranose = L-ribulose. Its pathway is carbohydrate degradation; L-arabinose degradation via L-ribulose; D-xylulose 5-phosphate from L-arabinose (bacterial route): step 1/3. Its function is as follows. Catalyzes the conversion of L-arabinose to L-ribulose. The protein is L-arabinose isomerase of Shigella dysenteriae serotype 1 (strain Sd197).